The chain runs to 449 residues: Chromogranin-A (449 aa).

The N-terminal stretch at 1 to 18 is a signal peptide; sequence MRSAAVLALLLCAGQVIA. Cys35 and Cys56 are disulfide-bonded. The segment at 87-431 is disordered; the sequence is AKERTHQQKK…EDQELESLSA (345 aa). Ser99 carries the phosphoserine modification. Basic and acidic residues predominate over residues 107 to 140; the sequence is VLEKPNDQAEPKEVTEEVSSKDAAEKRDDFKEVE. Ser142 is subject to Phosphoserine. A glycan (O-linked (GalNAc...) serine) is linked at Ser185. Tyr191 bears the Phosphotyrosine mark. Ser200 carries the post-translational modification Phosphoserine. Ser204 carries an O-linked (GalNAc...) serine glycan. A Phosphoserine modification is found at Ser215. The segment covering 233 to 242 has biased composition (basic and acidic residues); the sequence is EAEAREKAVP. O-linked (GalNAc...) threonine glycosylation occurs at Thr249. Basic and acidic residues predominate over residues 279–297; it reads GAEEAKPPEGKGEWAHSRQ. At Ser295 the chain carries Phosphoserine. Position 312 is a glycine amide (Gly312). A phosphoserine mark is found at Ser315, Ser325, and Ser363. Residues 323-351 show a composition bias toward basic and acidic residues; that stretch reads QLSKEWEDAKRWSKMDQLAKELTAEKRLE. Met364 carries the post-translational modification Methionine sulfoxide. Phosphoserine is present on residues Ser390, Ser394, Ser416, and Ser430. Positions 406 to 423 are enriched in basic and acidic residues; the sequence is YPEEKKEEEGSANRRPED. An O-linked (Xyl...) (chondroitin sulfate) serine glycan is attached at Ser416.

It belongs to the chromogranin/secretogranin protein family. As to quaternary structure, self-interacts; self-assembly is promoted in vitro by chondroitin sulfate attachment which occurs at mildly acidic pH conditions. Interacts with SCG3. Interacts with ITPR1 in the secretory granules. In terms of processing, in secretory granules, is attacked at both N- and C-terminal sides by proteolytic enzymes generating numerous peptides of various activities. Proteolytic processing can give rise to additional longer forms of catestatin peptides which display a less potent catecholamine release-inhibitory activity. O-glycosylated; contains chondroitin sulfate (CS). CS attachment is pH-dependent, being observed at mildly acidic conditions of pH 5 but not at neutral pH, and promotes self-assembly in vitro. Highest concentration of GE-25 found in adrenal medulla with lower levels present in the pituitary, the intestinal mucosa and the pancreas. Also found in the brain.

It is found in the secreted. It localises to the cytoplasmic vesicle. The protein localises to the secretory vesicle. Its subcellular location is the neuronal dense core vesicle. Strongly inhibits glucose induced insulin release from the pancreas. Its function is as follows. Completely inhibits catecholamine release from chromaffin cells. Functionally, has antibacterial activity against M.luteus. Not active against E.coli. In terms of biological role, inhibits catecholamine release from chromaffin cells and noradrenergic neurons by acting as a non-competitive nicotinic cholinergic antagonist. Displays antibacterial activity against Gram-positive bacteria M.luteus and B.megaterium, and Gram-negative bacteria E.coli, and antifungal activity against a variety of filamentous fungi including A.fumigatus, N.hematococca, F.culmorum, F.oxyporum, T.mentagrophytes and several forms of Candida: C.albicans, C.tropicalis, C.glabrata and C.neoform. Can induce mast cell migration, degranulation and production of cytokines and chemokines. Has antibacterial activity against Gram-positive bacteria M.luteus, B.megaterium. Not active against Gram-positive bacteria B.cereus, B.subtilis, S.pyogenes, M.fortuitum, S.aureus and L.monocytogenes and against Gram-negative bacteria E.coli, E.cloacae, S.typhimurium, K.pneumoniae and P.aeruginosa. Possesses antifungal activity against N.crassa, A.fumigatus, A.brassicicola, N.hematococca, F.culmorum and F.oxyporum and against the yeast S.cerevisiae and C.albicans. Inactive against A.benhamiae. Its function is as follows. Has antifungal activity against N.crassa, A.fumigatus, A.brassicicola, N.hematococca, F.culmorum, F.oxyporum, A.benhamiae, C.neoformans, as well as against yeasts C.albicans, and C.tropicalis. Seems to be inactive against C.glabrata. Interacts with the fungal cell wall, crosses the plasma membrane and accumulates in fungal cells where it inhibits calcineurin activity. Functionally, regulates granule biogenesis in endocrine cells by up-regulating the transcription of protease nexin 1 (SERPINE2) via a cAMP-PKA-SP1 pathway. This leads to inhibition of granule protein degradation in the Golgi complex which in turn promotes granule formation. The chain is Chromogranin-A (CHGA) from Bos taurus (Bovine).